Here is a 232-residue protein sequence, read N- to C-terminus: Large ribosomal subunit protein uL1 (232 aa).

It belongs to the universal ribosomal protein uL1 family. As to quaternary structure, part of the 50S ribosomal subunit.

Binds directly to 23S rRNA. The L1 stalk is quite mobile in the ribosome, and is involved in E site tRNA release. Functionally, protein L1 is also a translational repressor protein, it controls the translation of the L11 operon by binding to its mRNA. This chain is Large ribosomal subunit protein uL1, found in Bacillus cereus (strain ATCC 14579 / DSM 31 / CCUG 7414 / JCM 2152 / NBRC 15305 / NCIMB 9373 / NCTC 2599 / NRRL B-3711).